The primary structure comprises 421 residues: ATP-dependent RNA helicase RhlB (421 aa).

A Q motif motif is present at residues 9 to 37 (QKFSDFALHPQVVEALEKKGFYNCTPIQA). Positions 40-219 (LPLTLAGRDV…FEQMNNAEYV (180 aa)) constitute a Helicase ATP-binding domain. 53–60 (AQTGTGKT) contributes to the ATP binding site. The DEAD box signature appears at 165 to 168 (DEAD). A Helicase C-terminal domain is found at 245–390 (RLLQTLIEEE…VSKYNPEALM (146 aa)). The tract at residues 396–421 (PLRLTRSRPGNGPRRAGAPRNRRRSG) is disordered. The segment covering 402 to 414 (SRPGNGPRRAGAP) has biased composition (low complexity).

Belongs to the DEAD box helicase family. RhlB subfamily. In terms of assembly, component of the RNA degradosome, which is a multiprotein complex involved in RNA processing and mRNA degradation.

Its subcellular location is the cytoplasm. It catalyses the reaction ATP + H2O = ADP + phosphate + H(+). Its function is as follows. DEAD-box RNA helicase involved in RNA degradation. Has RNA-dependent ATPase activity and unwinds double-stranded RNA. The polypeptide is ATP-dependent RNA helicase RhlB (Salmonella agona (strain SL483)).